Reading from the N-terminus, the 590-residue chain is Aspartate--tRNA ligase (590 aa).

Position 180 (Glu180) interacts with L-aspartate. The tract at residues 204 to 207 (QLFK) is aspartate. Arg226 contacts L-aspartate. Residues 226-228 (RDE) and Gln235 each bind ATP. L-aspartate is bound at residue His454. Glu488 is an ATP binding site. Arg495 serves as a coordination point for L-aspartate. Residue 540–543 (GFDR) coordinates ATP.

It belongs to the class-II aminoacyl-tRNA synthetase family. Type 1 subfamily. In terms of assembly, homodimer.

It localises to the cytoplasm. The enzyme catalyses tRNA(Asp) + L-aspartate + ATP = L-aspartyl-tRNA(Asp) + AMP + diphosphate. Its function is as follows. Catalyzes the attachment of L-aspartate to tRNA(Asp) in a two-step reaction: L-aspartate is first activated by ATP to form Asp-AMP and then transferred to the acceptor end of tRNA(Asp). This is Aspartate--tRNA ligase from Clostridium kluyveri (strain NBRC 12016).